Consider the following 144-residue polypeptide: Interleukin-3 (144 aa).

The first 17 residues, 1–17 (MSSLSILHLLLLLLALH), serve as a signal peptide directing secretion.

The protein belongs to the IL-3 family. In terms of assembly, monomer.

The protein resides in the secreted. Functionally, granulocyte/macrophage colony-stimulating factors are cytokines that act in hematopoiesis by controlling the production, differentiation, and function of 2 related white cell populations of the blood, the granulocytes and the monocytes-macrophages. This CSF induces granulocytes, macrophages, mast cells, stem cells, erythroid cells, eosinophils and megakaryocytes. In Bos taurus (Bovine), this protein is Interleukin-3 (IL3).